The chain runs to 149 residues: MKKIDIKILDSRLKDQLPAYATSGSAGLDLRACIEHVMTIQPGEAHLIPTGIAIHLSDPGLAALVLPRSGLGHKHGIVMGNLVGLIDSDYQGQIFVSCWNRGQAPFLLNPLERIAQLVVVPVVQVGFKVVDDFEQSERGANGFGSTGKH.

Substrate-binding positions include 68–70, Asn-81, and 85–87; these read RSG and LID.

This sequence belongs to the dUTPase family. Mg(2+) is required as a cofactor.

It carries out the reaction dUTP + H2O = dUMP + diphosphate + H(+). Its pathway is pyrimidine metabolism; dUMP biosynthesis; dUMP from dCTP (dUTP route): step 2/2. Functionally, this enzyme is involved in nucleotide metabolism: it produces dUMP, the immediate precursor of thymidine nucleotides and it decreases the intracellular concentration of dUTP so that uracil cannot be incorporated into DNA. The protein is Deoxyuridine 5'-triphosphate nucleotidohydrolase of Nitrosospira multiformis (strain ATCC 25196 / NCIMB 11849 / C 71).